Consider the following 542-residue polypeptide: Putative leucine aminopeptidase 1 (542 aa).

The Mn(2+) site is built by Lys-294 and Asp-299. Lys-323 is a catalytic residue. Mn(2+) is bound by residues Asp-336, Asp-396, and Glu-398. Residue Arg-400 is part of the active site.

Belongs to the peptidase M17 family. As to quaternary structure, homohexamer (dimer of homotrimers). Mn(2+) serves as cofactor.

It is found in the cytoplasm. The catalysed reaction is Release of an N-terminal amino acid, Xaa-|-Yaa-, in which Xaa is preferably Leu, but may be other amino acids including Pro although not Arg or Lys, and Yaa may be Pro. Amino acid amides and methyl esters are also readily hydrolyzed, but rates on arylamides are exceedingly low.. The enzyme catalyses Release of N-terminal proline from a peptide.. Presumably involved in the processing and regular turnover of intracellular proteins. Catalyzes the removal of unsubstituted N-terminal amino acids from various peptides. This Oryza sativa subsp. japonica (Rice) protein is Putative leucine aminopeptidase 1.